The following is a 314-amino-acid chain: 3'-5' exoribonuclease YhaM (314 aa).

The HD domain occupies 163–279; sequence HVVSMLDLAK…LHYIDNLDAK (117 aa).

The protein belongs to the YhaM family.

Its function is as follows. Shows a 3'-5' exoribonuclease activity. This is 3'-5' exoribonuclease YhaM from Bacillus cereus (strain AH820).